We begin with the raw amino-acid sequence, 269 residues long: Undecaprenyl-diphosphatase (269 aa).

8 helical membrane-spanning segments follow: residues 4-24 (IELW…WLPI), 50-70 (LWLH…PYWL), 86-106 (LFAI…YKVL), 113-133 (ATGD…GLLL), 146-166 (VNVV…IPGI), 186-206 (AVWL…ALEL), 220-240 (WMVT…EVLL), and 246-266 (LDFS…PLAA).

It belongs to the UppP family.

It is found in the cell membrane. The enzyme catalyses di-trans,octa-cis-undecaprenyl diphosphate + H2O = di-trans,octa-cis-undecaprenyl phosphate + phosphate + H(+). Its function is as follows. Catalyzes the dephosphorylation of undecaprenyl diphosphate (UPP). This chain is Undecaprenyl-diphosphatase, found in Methanopyrus kandleri (strain AV19 / DSM 6324 / JCM 9639 / NBRC 100938).